Here is a 1188-residue protein sequence, read N- to C-terminus: DNA-directed RNA polymerase subunit beta (1188 aa).

It belongs to the RNA polymerase beta chain family. In terms of assembly, the RNAP catalytic core consists of 2 alpha, 1 beta, 1 beta' and 1 omega subunit. When a sigma factor is associated with the core the holoenzyme is formed, which can initiate transcription.

It carries out the reaction RNA(n) + a ribonucleoside 5'-triphosphate = RNA(n+1) + diphosphate. Its function is as follows. DNA-dependent RNA polymerase catalyzes the transcription of DNA into RNA using the four ribonucleoside triphosphates as substrates. The chain is DNA-directed RNA polymerase subunit beta from Streptococcus pyogenes serotype M3 (strain ATCC BAA-595 / MGAS315).